Consider the following 235-residue polypeptide: Large ribosomal subunit protein uL1 (235 aa).

Belongs to the universal ribosomal protein uL1 family. Part of the 50S ribosomal subunit.

In terms of biological role, binds directly to 23S rRNA. The L1 stalk is quite mobile in the ribosome, and is involved in E site tRNA release. Protein L1 is also a translational repressor protein, it controls the translation of the L11 operon by binding to its mRNA. The polypeptide is Large ribosomal subunit protein uL1 (Prochlorococcus marinus (strain NATL1A)).